Reading from the N-terminus, the 346-residue chain is NADH-ubiquinone oxidoreductase chain 2 (346 aa).

The next 11 membrane-spanning stretches (helical) occupy residues 1–21 (MNPHATPVLVLSLALGTTITI), 25–45 (HWVLAWTGLEINTLAIIPLIS), 60–80 (FLTQAAASALVLFSSMTNAWA), 95–115 (CLLLTAAIAIKLGLVPFHFWF), 124–144 (LMTALLLSTLMKFPPLTLLLM), 149–169 (LNPALLTTMALASAALGGWMG), 178–195 (ILAFSSISHLGWIAIILV), 200–219 (LALLTFYLYTIMTSAVFMAL), 242–262 (ATLMLMLLSLAGLPPLTGFMP), 274–294 (EMTPAAMAIAMLSLLSLFFYL), and 326–346 (AILASLSILLLPLSPMVHAIV).

The protein belongs to the complex I subunit 2 family.

The protein localises to the mitochondrion inner membrane. It catalyses the reaction a ubiquinone + NADH + 5 H(+)(in) = a ubiquinol + NAD(+) + 4 H(+)(out). Core subunit of the mitochondrial membrane respiratory chain NADH dehydrogenase (Complex I) that is believed to belong to the minimal assembly required for catalysis. Complex I functions in the transfer of electrons from NADH to the respiratory chain. The immediate electron acceptor for the enzyme is believed to be ubiquinone. This Mareca penelope (Eurasian wigeon) protein is NADH-ubiquinone oxidoreductase chain 2 (MT-ND2).